The primary structure comprises 459 residues: Phosphomethylpyrimidine synthase (459 aa).

Substrate-binding positions include asparagine 80, methionine 109, tyrosine 139, histidine 175, 195 to 197 (SRG), 236 to 239 (DSLR), and glutamate 275. Position 279 (histidine 279) interacts with Zn(2+). Tyrosine 302 serves as a coordination point for substrate. A Zn(2+)-binding site is contributed by histidine 343. [4Fe-4S] cluster contacts are provided by cysteine 423, cysteine 426, and cysteine 431.

Belongs to the ThiC family. [4Fe-4S] cluster serves as cofactor.

The catalysed reaction is 5-amino-1-(5-phospho-beta-D-ribosyl)imidazole + S-adenosyl-L-methionine = 4-amino-2-methyl-5-(phosphooxymethyl)pyrimidine + CO + 5'-deoxyadenosine + formate + L-methionine + 3 H(+). It participates in cofactor biosynthesis; thiamine diphosphate biosynthesis. Its function is as follows. Catalyzes the synthesis of the hydroxymethylpyrimidine phosphate (HMP-P) moiety of thiamine from aminoimidazole ribotide (AIR) in a radical S-adenosyl-L-methionine (SAM)-dependent reaction. The sequence is that of Phosphomethylpyrimidine synthase from Prochlorococcus marinus (strain MIT 9211).